The chain runs to 187 residues: UPF0301 protein YqgE (187 aa).

It belongs to the UPF0301 (AlgH) family.

This is UPF0301 protein YqgE from Salmonella paratyphi B (strain ATCC BAA-1250 / SPB7).